The sequence spans 178 residues: Interleukin-10 (178 aa).

The first 18 residues, 1–18, serve as a signal peptide directing secretion; that stretch reads MPGSALLCCLALLAGVKA. 2 disulfides stabilise this stretch: C30/C126 and C80/C132. N67 carries an N-linked (GlcNAc...) asparagine glycan. N134 carries an N-linked (GlcNAc...) asparagine glycan.

Belongs to the IL-10 family. As to quaternary structure, homodimer. Interacts with IL10RA and IL10RB.

The protein localises to the secreted. In terms of biological role, major immune regulatory cytokine that acts on many cells of the immune system where it has profound anti-inflammatory functions, limiting excessive tissue disruption caused by inflammation. Mechanistically, IL10 binds to its heterotetrameric receptor comprising IL10RA and IL10RB leading to JAK1 and STAT2-mediated phosphorylation of STAT3. In turn, STAT3 translocates to the nucleus where it drives expression of anti-inflammatory mediators. Targets antigen-presenting cells (APCs) such as macrophages and monocytes and inhibits their release of pro-inflammatory cytokines including granulocyte-macrophage colony-stimulating factor /GM-CSF, granulocyte colony-stimulating factor/G-CSF, IL-1 alpha, IL-1 beta, IL-6, IL-8 and TNF-alpha. Also interferes with antigen presentation by reducing the expression of MHC-class II and co-stimulatory molecules, thereby inhibiting their ability to induce T cell activation. In addition, controls the inflammatory response of macrophages by reprogramming essential metabolic pathways including mTOR signaling. The sequence is that of Interleukin-10 (IL10) from Cavia porcellus (Guinea pig).